We begin with the raw amino-acid sequence, 379 residues long: Alcohol dehydrogenase class-3 (379 aa).

The residue at position 2 (S2) is an N-acetylserine. C48, H70, C100, C103, C106, C114, and C177 together coordinate Zn(2+).

The protein belongs to the zinc-containing alcohol dehydrogenase family. Class-III subfamily. Zn(2+) is required as a cofactor.

The catalysed reaction is a primary alcohol + NAD(+) = an aldehyde + NADH + H(+). It carries out the reaction a secondary alcohol + NAD(+) = a ketone + NADH + H(+). It catalyses the reaction S-(hydroxymethyl)glutathione + NADP(+) = S-formylglutathione + NADPH + H(+). The enzyme catalyses S-(hydroxymethyl)glutathione + NAD(+) = S-formylglutathione + NADH + H(+). The catalysed reaction is octan-1-ol + NAD(+) = octanal + NADH + H(+). Class-III ADH is remarkably ineffective in oxidizing ethanol, but it readily catalyzes the oxidation of long-chain primary alcohols and the oxidation of S-(hydroxymethyl) glutathione. This chain is Alcohol dehydrogenase class-3 (Fdh), found in Drosophila melanogaster (Fruit fly).